The sequence spans 528 residues: Catalase (528 aa).

Over residues 1–22 (MADRREKSADQMKLWKESRANQ) the composition is skewed to basic and acidic residues. The segment at 1–32 (MADRREKSADQMKLWKESRANQKPDVLTTGGG) is disordered. Residues H75 and N148 contribute to the active site. Residues H194, S201, R203, N213, K237, W303, H305, and K306 each contribute to the NADP(+) site. Position 358 (Y358) interacts with heme. Positions 525-528 (KANL) match the Microbody targeting signal; atypical motif.

Belongs to the catalase family. As to quaternary structure, homotetramer. The cofactor is heme. NADP(+) is required as a cofactor.

Its subcellular location is the peroxisome matrix. It catalyses the reaction 2 H2O2 = O2 + 2 H2O. In terms of biological role, catalyzes the degradation of hydrogen peroxide (H(2)O(2)) generated by peroxisomal oxidases to water and oxygen, thereby protecting cells from the toxic effects of hydrogen peroxide. The protein is Catalase (cat) of Glandirana rugosa (Japanese wrinkled frog).